We begin with the raw amino-acid sequence, 217 residues long: Somatotropin (217 aa).

Residues 1 to 26 (MMAAGPRTSLLLAFALLCLPWTQVVG) form the signal peptide. His-46 provides a ligand contact to Zn(2+). A disulfide bridge connects residues Cys-79 and Cys-190. Ser-132 bears the Phosphoserine mark. Zn(2+) is bound at residue Glu-199. Cys-207 and Cys-215 are joined by a disulfide.

It belongs to the somatotropin/prolactin family.

The protein localises to the secreted. Its function is as follows. Plays an important role in growth control. Its major role in stimulating body growth is to stimulate the liver and other tissues to secrete IGF1. It stimulates both the differentiation and proliferation of myoblasts. It also stimulates amino acid uptake and protein synthesis in muscle and other tissues. The polypeptide is Somatotropin (GH1) (Bos taurus (Bovine)).